Here is a 338-residue protein sequence, read N- to C-terminus: Lipoate-protein ligase A (338 aa).

Positions 29–216 (PTTQRVLFLW…AFFDYFGEQC (188 aa)) constitute a BPL/LPL catalytic domain. Residues R71, 76–79 (GAVF), and K134 each bind ATP. K134 contacts (R)-lipoate.

It belongs to the LplA family. In terms of assembly, monomer.

It localises to the cytoplasm. The enzyme catalyses L-lysyl-[lipoyl-carrier protein] + (R)-lipoate + ATP = N(6)-[(R)-lipoyl]-L-lysyl-[lipoyl-carrier protein] + AMP + diphosphate + H(+). It functions in the pathway protein modification; protein lipoylation via exogenous pathway; protein N(6)-(lipoyl)lysine from lipoate: step 1/2. Its pathway is protein modification; protein lipoylation via exogenous pathway; protein N(6)-(lipoyl)lysine from lipoate: step 2/2. Its function is as follows. Catalyzes both the ATP-dependent activation of exogenously supplied lipoate to lipoyl-AMP and the transfer of the activated lipoyl onto the lipoyl domains of lipoate-dependent enzymes. The sequence is that of Lipoate-protein ligase A from Pectobacterium carotovorum subsp. carotovorum (strain PC1).